A 382-amino-acid chain; its full sequence is tRNA(Met) cytidine acetate ligase (382 aa).

ATP contacts are provided by residues Ile7–His20, Gly100, Asn153, and Arg178.

The protein belongs to the TmcAL family.

Its subcellular location is the cytoplasm. The catalysed reaction is cytidine(34) in elongator tRNA(Met) + acetate + ATP = N(4)-acetylcytidine(34) in elongator tRNA(Met) + AMP + diphosphate. In terms of biological role, catalyzes the formation of N(4)-acetylcytidine (ac(4)C) at the wobble position of elongator tRNA(Met), using acetate and ATP as substrates. First activates an acetate ion to form acetyladenylate (Ac-AMP) and then transfers the acetyl group to tRNA to form ac(4)C34. The polypeptide is tRNA(Met) cytidine acetate ligase (Staphylococcus carnosus (strain TM300)).